We begin with the raw amino-acid sequence, 378 residues long: Chaperone protein DnaJ (378 aa).

Residues 5-70 (DYYEVLSVSR…DKKAAYDQFG (66 aa)) form the J domain. The CR-type zinc finger occupies 133–211 (GLTKELRIPT…CHGEGRVEKS (79 aa)). Cysteine 146, cysteine 149, cysteine 163, cysteine 166, cysteine 185, cysteine 188, cysteine 199, and cysteine 202 together coordinate Zn(2+). CXXCXGXG motif repeat units lie at residues 146–153 (CDSCDGSG), 163–170 (CGTCHGQG), 185–192 (CPTCHGRG), and 199–206 (CNKCHGEG).

This sequence belongs to the DnaJ family. Homodimer. The cofactor is Zn(2+).

The protein resides in the cytoplasm. In terms of biological role, participates actively in the response to hyperosmotic and heat shock by preventing the aggregation of stress-denatured proteins and by disaggregating proteins, also in an autonomous, DnaK-independent fashion. Unfolded proteins bind initially to DnaJ; upon interaction with the DnaJ-bound protein, DnaK hydrolyzes its bound ATP, resulting in the formation of a stable complex. GrpE releases ADP from DnaK; ATP binding to DnaK triggers the release of the substrate protein, thus completing the reaction cycle. Several rounds of ATP-dependent interactions between DnaJ, DnaK and GrpE are required for fully efficient folding. Also involved, together with DnaK and GrpE, in the DNA replication of plasmids through activation of initiation proteins. The polypeptide is Chaperone protein DnaJ (Shewanella sediminis (strain HAW-EB3)).